The following is a 40-amino-acid chain: Protamine-2 (40 aa).

Positions 1–40 (MPPRRKRVSSAPRRRRRTYRRTTAHKHQERPVHRRRRRRH) are disordered.

As to expression, testis.

It is found in the nucleus. Its subcellular location is the chromosome. Protamines substitute for histones in the chromatin of sperm during the haploid phase of spermatogenesis. They compact sperm DNA into a highly condensed, stable and inactive complex. This Bufo japonicus (Japanese common toad) protein is Protamine-2 (PBP2).